Reading from the N-terminus, the 356-residue chain is 1-deoxy-D-xylulose 5-phosphate reductoisomerase (356 aa).

NADPH-binding residues include threonine 7, glycine 8, serine 9, isoleucine 10, glycine 31, asparagine 33, and asparagine 111. 1-deoxy-D-xylulose 5-phosphate is bound at residue lysine 112. Glutamate 113 is a binding site for NADPH. Aspartate 131 is a binding site for Mn(2+). Positions 132, 133, 155, and 178 each coordinate 1-deoxy-D-xylulose 5-phosphate. Glutamate 133 serves as a coordination point for Mn(2+). Glycine 184 provides a ligand contact to NADPH. Positions 191, 196, 197, and 200 each coordinate 1-deoxy-D-xylulose 5-phosphate. Glutamate 200 contacts Mn(2+).

Belongs to the DXR family. Mg(2+) is required as a cofactor. Requires Mn(2+) as cofactor.

The enzyme catalyses 2-C-methyl-D-erythritol 4-phosphate + NADP(+) = 1-deoxy-D-xylulose 5-phosphate + NADPH + H(+). The protein operates within isoprenoid biosynthesis; isopentenyl diphosphate biosynthesis via DXP pathway; isopentenyl diphosphate from 1-deoxy-D-xylulose 5-phosphate: step 1/6. In terms of biological role, catalyzes the NADPH-dependent rearrangement and reduction of 1-deoxy-D-xylulose-5-phosphate (DXP) to 2-C-methyl-D-erythritol 4-phosphate (MEP). The protein is 1-deoxy-D-xylulose 5-phosphate reductoisomerase of Campylobacter jejuni (strain RM1221).